The primary structure comprises 236 residues: Phospholipid hydroperoxide glutathione peroxidase 1, chloroplastic (236 aa).

Over residues 1 to 16 (MVSMTTSSSSYGTFST) the composition is skewed to low complexity. The disordered stretch occupies residues 1-24 (MVSMTTSSSSYGTFSTVVNSSRPN). Residues 1–64 (MVSMTTSSSS…PINPGFLFKS (64 aa)) constitute a chloroplast transit peptide. The active site involves C111.

Belongs to the glutathione peroxidase family. Expressed in leaves, stems, flowers, green siliques and seeds.

The protein resides in the plastid. It is found in the chloroplast. The catalysed reaction is a hydroperoxy polyunsaturated fatty acid + 2 glutathione = a hydroxy polyunsaturated fatty acid + glutathione disulfide + H2O. In terms of biological role, protects cells and enzymes from oxidative damage, by catalyzing the reduction of hydrogen peroxide, lipid peroxides and organic hydroperoxide, by glutathione. The sequence is that of Phospholipid hydroperoxide glutathione peroxidase 1, chloroplastic (GPX1) from Arabidopsis thaliana (Mouse-ear cress).